A 134-amino-acid polypeptide reads, in one-letter code: Small ribosomal subunit protein uS8c (134 aa).

It belongs to the universal ribosomal protein uS8 family. Part of the 30S ribosomal subunit.

The protein resides in the plastid. It localises to the chloroplast. One of the primary rRNA binding proteins, it binds directly to 16S rRNA central domain where it helps coordinate assembly of the platform of the 30S subunit. The protein is Small ribosomal subunit protein uS8c (rps8) of Ipomoea purpurea (Common morning glory).